Reading from the N-terminus, the 745-residue chain is Protein transport protein SEC23 D (745 aa).

Zn(2+)-binding residues include Cys-53, Cys-56, Cys-73, and Cys-76. Positions 53 to 76 (CENCYAYFNTYCELDQWAWNCSLC) are zinc finger-like.

This sequence belongs to the SEC23/SEC24 family. SEC24 subfamily. In terms of assembly, component of the coat protein complex II (COPII), composed of at least five proteins: the Sec23/24 complex, the Sec13/31 complex and Sar1. Mostly expressed in closed floral bud, pollen and flowers, and, to a lower extent, in mature siliques, roots and leaf primordia.

The protein resides in the cytoplasmic vesicle. Its subcellular location is the COPII-coated vesicle membrane. The protein localises to the endoplasmic reticulum membrane. It is found in the membrane. Functionally, component of the coat protein complex II (COPII) which promotes the formation of transport vesicles from the endoplasmic reticulum (ER). The coat has two main functions, the physical deformation of the endoplasmic reticulum membrane into vesicles and the selection of cargo molecules. May contribute to COPII-coated vesicles formation and ER-Golgi vesicle transport. Together with SEC23A, essential for pollen wall development and exine patterning, probably by regulating endoplasmic reticulum (ER) export of lipids and proteins (e.g. sporopollenin) necessary for pollen wall formation. Also involved in plastid physiology in anther tapetal cells. The chain is Protein transport protein SEC23 D from Arabidopsis thaliana (Mouse-ear cress).